Reading from the N-terminus, the 444-residue chain is MSVIHPLQNLLTSRDGSLVFAIIKNCILSFKYQSPNHWEFAGKWSDDFDKIQESRNTTAKEQQGQSSENENENKKLKSNKGDSIKRTAAKVPSPGLGAPPIYSYIRNLRLTSDESRLIACADSDKSLLVFDVDKTSKNVLKLRKRFCFSKRPNAISIAEDDTTVIIADKFGDVYSIDINSIPEEKFTQEPILGHVSMLTDVHLIKDSDGHQFIITSDRDEHIKISHYPQCFIVDKWLFGHKHFVSSICCGKDYLLLSAGGDDKIFAWDWKTGKNLSTFDYNSLIKPYLNDQHLAPPRFQNENNDIIEFAVSKIIKSKNLPFVAFFVEATKCIIILEMSEKQKGDLALKQIITFPYNVISLSAHNDEFQVTLDNKESSGVQKNFAKFIEYNLNENSFVVNNEKSNEFDSAIIQSVQGDSNLVTKKEEIYPLYNVSSLRKHGEHYS.

WD repeat units lie at residues 1 to 47 (MSVI…WSDD), 48 to 99 (FDKI…LGAP), 100 to 147 (PIYS…KRFC), 148 to 192 (FSKR…EPIL), 193 to 237 (GHVS…DKWL), 238 to 279 (FGHK…STFD), and 308 to 354 (FAVS…ITFP). Residues 55-92 (RNTTAKEQQGQSSENENENKKLKSNKGDSIKRTAAKVP) are disordered. The segment covering 71-85 (NENKKLKSNKGDSIK) has biased composition (basic and acidic residues). S93 is subject to Phosphoserine.

Belongs to the WD repeat TRM82 family. In terms of assembly, forms a heterodimer with the catalytic subunit TRM8.

It is found in the nucleus. The protein operates within tRNA modification; N(7)-methylguanine-tRNA biosynthesis. Required for the formation of N(7)-methylguanine at position 46 (m7G46) in tRNA, a modification required to maintain stability of tRNAs; its absence resulting in tRNA decay. In the complex, it is required to stabilize and induce conformational changes of the catalytic subunit. This is tRNA (guanine-N(7)-)-methyltransferase non-catalytic subunit TRM82 from Saccharomyces cerevisiae (strain ATCC 204508 / S288c) (Baker's yeast).